A 309-amino-acid chain; its full sequence is Ornithine carbamoyltransferase (309 aa).

Carbamoyl phosphate contacts are provided by residues 56 to 59, glutamine 83, arginine 107, and 134 to 137; these read STRT and HPCQ. Residues asparagine 165, aspartate 223, and 227–228 contribute to the L-ornithine site; that span reads SM. Residues 263–264 and arginine 291 contribute to the carbamoyl phosphate site; that span reads CL.

It belongs to the aspartate/ornithine carbamoyltransferase superfamily. OTCase family.

It is found in the cytoplasm. It carries out the reaction carbamoyl phosphate + L-ornithine = L-citrulline + phosphate + H(+). Its pathway is amino-acid biosynthesis; L-arginine biosynthesis; L-arginine from L-ornithine and carbamoyl phosphate: step 1/3. Its function is as follows. Reversibly catalyzes the transfer of the carbamoyl group from carbamoyl phosphate (CP) to the N(epsilon) atom of ornithine (ORN) to produce L-citrulline. The protein is Ornithine carbamoyltransferase of Burkholderia cenocepacia (strain HI2424).